We begin with the raw amino-acid sequence, 379 residues long: Dual-specificity RNA methyltransferase RlmN (379 aa).

E95 acts as the Proton acceptor in catalysis. A Radical SAM core domain is found at 101 to 345 (EETRGTLCVS…TTVRKTRGDD (245 aa)). An intrachain disulfide couples C108 to C350. Residues C115, C119, and C122 each coordinate [4Fe-4S] cluster. Residues 176 to 177 (GE), S208, 230 to 232 (SLH), and N307 each bind S-adenosyl-L-methionine. Catalysis depends on C350, which acts as the S-methylcysteine intermediate.

This sequence belongs to the radical SAM superfamily. RlmN family. [4Fe-4S] cluster serves as cofactor.

It localises to the cytoplasm. The catalysed reaction is adenosine(2503) in 23S rRNA + 2 reduced [2Fe-2S]-[ferredoxin] + 2 S-adenosyl-L-methionine = 2-methyladenosine(2503) in 23S rRNA + 5'-deoxyadenosine + L-methionine + 2 oxidized [2Fe-2S]-[ferredoxin] + S-adenosyl-L-homocysteine. It catalyses the reaction adenosine(37) in tRNA + 2 reduced [2Fe-2S]-[ferredoxin] + 2 S-adenosyl-L-methionine = 2-methyladenosine(37) in tRNA + 5'-deoxyadenosine + L-methionine + 2 oxidized [2Fe-2S]-[ferredoxin] + S-adenosyl-L-homocysteine. Functionally, specifically methylates position 2 of adenine 2503 in 23S rRNA and position 2 of adenine 37 in tRNAs. m2A2503 modification seems to play a crucial role in the proofreading step occurring at the peptidyl transferase center and thus would serve to optimize ribosomal fidelity. The protein is Dual-specificity RNA methyltransferase RlmN of Burkholderia lata (strain ATCC 17760 / DSM 23089 / LMG 22485 / NCIMB 9086 / R18194 / 383).